The primary structure comprises 321 residues: MPFITHIKTFAALGSGVIGSGWVARALAHGLDVIAWDPAPGAEQALRQRVANAWPALEKQGLAAGAAQHRLSFVSSIEECVRDADFIQESAPERLDLKLDLHAKISAAAKPDAIIASSTSGLLPSEFYESSSHPERCVVGHPFNPVYLLPLVEIVGGRHTAPEAIEAAKGIYTELGMRPLHVRKEVPGFIADRLLEALWREALHLVNDGVATTGEIDDAIRFGAGLRWSFMGTFLTYTLAGGDAGMRHFMQQFGPALKLPWTYLPAPELTERLIDEVVDGTAAQVGERSIAELERYRDDTLLAVLEAIGTSKAKHGMTFSE.

14 to 19 serves as a coordination point for NAD(+); that stretch reads GSGVIG. Residues 317–321 are important for catalytic activity; that stretch reads MTFSE.

This sequence belongs to the 3-hydroxyacyl-CoA dehydrogenase family. L-carnitine dehydrogenase subfamily. As to quaternary structure, homodimer.

It localises to the cytoplasm. It carries out the reaction carnitine + NAD(+) = 3-dehydrocarnitine + NADH + H(+). The protein operates within amine and polyamine metabolism; carnitine metabolism. With respect to regulation, the enzyme activity is strongly inhibited by Ag(+), Ni(+), Hg(+), and p-chloromercuribenzoate, and partially inhibited by Li(+), Ca(2+), Mn(2+), Co(2+), Cu(2+), and Zn(2+). In terms of biological role, catalyzes the NAD(+)-dependent oxidation of L-carnitine to 3-dehydrocarnitine. Is specific for L-carnitine and NAD(+) as substrates since D-carnitine, other carnitine analogs such as choline and betaine, and NADP(+) are not substrates. Despite a high similarity to 3-hydroxyacyl-CoA dehydrogenases, cannot dehydrogenate 3-hydroxybutylate and 3-hydroxybutyl-CoA. Is probably involved in a L-carnitine degradation pathway that allows Pseudomonas sp. strain NBRC 13558 to grow on L-carnitine as the sole source of carbon and nitrogen. The polypeptide is L-carnitine dehydrogenase (Pseudomonas sp).